The sequence spans 240 residues: Glutathione S-transferase theta-1 (240 aa).

A GST N-terminal domain is found at 2-82 (GLELYLDLLS…YLARKYKVPD (81 aa)). Residues His-40, 53-54 (KV), and 66-67 (ES) each bind glutathione. Residues 88 to 226 (DLQACARVDE…AKDSQPADPT (139 aa)) enclose the GST C-terminal domain.

This sequence belongs to the GST superfamily. Theta family. Homodimer.

The protein localises to the cytoplasm. It catalyses the reaction RX + glutathione = an S-substituted glutathione + a halide anion + H(+). Conjugation of reduced glutathione to a wide number of exogenous and endogenous hydrophobic electrophiles. Also binds steroids, bilirubin, carcinogens and numerous organic anions. Has dichloromethane dehalogenase activity. This is Glutathione S-transferase theta-1 (GSTT1) from Bos taurus (Bovine).